The sequence spans 557 residues: Dihydroxy-acid dehydratase (557 aa).

Asp78 contributes to the Mg(2+) binding site. Cys119 is a [2Fe-2S] cluster binding site. Mg(2+) contacts are provided by Asp120 and Lys121. N6-carboxylysine is present on Lys121. Position 192 (Cys192) interacts with [2Fe-2S] cluster. Position 446 (Glu446) interacts with Mg(2+). The active-site Proton acceptor is the Ser472.

The protein belongs to the IlvD/Edd family. As to quaternary structure, homodimer. It depends on [2Fe-2S] cluster as a cofactor. Requires Mg(2+) as cofactor.

It carries out the reaction (2R)-2,3-dihydroxy-3-methylbutanoate = 3-methyl-2-oxobutanoate + H2O. It catalyses the reaction (2R,3R)-2,3-dihydroxy-3-methylpentanoate = (S)-3-methyl-2-oxopentanoate + H2O. It functions in the pathway amino-acid biosynthesis; L-isoleucine biosynthesis; L-isoleucine from 2-oxobutanoate: step 3/4. Its pathway is amino-acid biosynthesis; L-valine biosynthesis; L-valine from pyruvate: step 3/4. Functionally, functions in the biosynthesis of branched-chain amino acids. Catalyzes the dehydration of (2R,3R)-2,3-dihydroxy-3-methylpentanoate (2,3-dihydroxy-3-methylvalerate) into 2-oxo-3-methylpentanoate (2-oxo-3-methylvalerate) and of (2R)-2,3-dihydroxy-3-methylbutanoate (2,3-dihydroxyisovalerate) into 2-oxo-3-methylbutanoate (2-oxoisovalerate), the penultimate precursor to L-isoleucine and L-valine, respectively. This Campylobacter fetus subsp. fetus (strain 82-40) protein is Dihydroxy-acid dehydratase.